Reading from the N-terminus, the 605-residue chain is UvrABC system protein C (605 aa).

Residues Gly15–Ile92 enclose the GIY-YIG domain. The 36-residue stretch at Gly197–Thr232 folds into the UVR domain.

This sequence belongs to the UvrC family. Interacts with UvrB in an incision complex.

It localises to the cytoplasm. Functionally, the UvrABC repair system catalyzes the recognition and processing of DNA lesions. UvrC both incises the 5' and 3' sides of the lesion. The N-terminal half is responsible for the 3' incision and the C-terminal half is responsible for the 5' incision. The polypeptide is UvrABC system protein C (Levilactobacillus brevis (strain ATCC 367 / BCRC 12310 / CIP 105137 / JCM 1170 / LMG 11437 / NCIMB 947 / NCTC 947) (Lactobacillus brevis)).